The sequence spans 101 residues: Small ribosomal subunit protein bS18c (101 aa).

Residues 82–101 form a disordered region; it reads KQFERAESTPRTPGPRTRNK.

Belongs to the bacterial ribosomal protein bS18 family. In terms of assembly, part of the 30S ribosomal subunit.

It is found in the plastid. It localises to the chloroplast. This Platanus occidentalis (Sycamore) protein is Small ribosomal subunit protein bS18c.